The chain runs to 177 residues: tRNA (cytidine(56)-2'-O)-methyltransferase (177 aa).

S-adenosyl-L-methionine contacts are provided by residues L84 and 109 to 113 (GAEKV).

The protein belongs to the aTrm56 family. In terms of assembly, homodimer.

Its subcellular location is the cytoplasm. It catalyses the reaction cytidine(56) in tRNA + S-adenosyl-L-methionine = 2'-O-methylcytidine(56) in tRNA + S-adenosyl-L-homocysteine + H(+). Specifically catalyzes the AdoMet-dependent 2'-O-ribose methylation of cytidine at position 56 in tRNAs. This chain is tRNA (cytidine(56)-2'-O)-methyltransferase, found in Methanosarcina barkeri (strain Fusaro / DSM 804).